An 83-amino-acid polypeptide reads, in one-letter code: MSDSPCLSPPAPSQGPTTPRKGPPKFKQRQTRQFKSKPPKKGVKGFGDDIPGMEGLGTDITVICPWEAFSHLELHELAQFGII.

Positions 1-51 (MSDSPCLSPPAPSQGPTTPRKGPPKFKQRQTRQFKSKPPKKGVKGFGDDIP) are disordered. The segment covering 22–43 (GPPKFKQRQTRQFKSKPPKKGV) has biased composition (basic residues).

The protein belongs to the rod/cone cGMP-PDE gamma subunit family. In terms of assembly, tetramer composed of two catalytic chains (alpha and beta), and two inhibitory chains (gamma).

It catalyses the reaction 3',5'-cyclic GMP + H2O = GMP + H(+). Functionally, participates in processes of transmission and amplification of the visual signal. cGMP-PDEs are the effector molecules in G-protein-mediated phototransduction in vertebrate rods and cones. The chain is Retinal cone rhodopsin-sensitive cGMP 3',5'-cyclic phosphodiesterase subunit gamma (Pde6h) from Rattus norvegicus (Rat).